The primary structure comprises 646 residues: Esterase EstA (646 aa).

The first 24 residues, 1-24, serve as a signal peptide directing secretion; it reads MIRMALKPLVAACLLASLSTAPQA. The Extracellular portion of the chain corresponds to 25–397; sequence APSPYSTLVV…DSAASGDGNG (373 aa). Serine 38 (nucleophile) is an active-site residue. Catalysis depends on residues aspartate 310 and histidine 313. The Autotransporter domain maps to 366–646; sequence QNVGQWRGFV…SVSLALSLDF (281 aa). Residues 398 to 408 form a beta stranded membrane-spanning segment; sequence YNLTLGGSYRI. At 409–410 the chain is on the periplasmic side; that stretch reads DE. Residues 411–421 traverse the membrane as a beta stranded segment; the sequence is AWRAGVAAGFY. The Extracellular segment spans residues 422 to 437; that stretch reads RQKLEAGAKDSDYRMN. A beta stranded membrane pass occupies residues 438-447; sequence SYMASAFVQY. The Periplasmic portion of the chain corresponds to 448–451; it reads QENR. A beta stranded membrane pass occupies residues 452 to 461; the sequence is WWADAALTGG. Topologically, residues 462–488 are extracellular; sequence YLDYDDLKRKFALGGGERSEKGDTNGH. The chain crosses the membrane as a beta stranded span at residues 489–500; that stretch reads LWAFSARLGYDI. Over 501-507 the chain is Periplasmic; it reads AQQADSP. A beta stranded transmembrane segment spans residues 508-518; the sequence is WHLSPFVSADY. The Extracellular segment spans residues 519 to 547; sequence ARVEVDGYSEKGASATALDYDDQKRSSKR. The chain crosses the membrane as a beta stranded span at residues 548–558; it reads LGAGLQGKYAF. The Periplasmic segment spans residues 559–561; it reads GSD. A beta stranded membrane pass occupies residues 562 to 571; that stretch reads TQLFAEYAHE. Residues 572–605 lie on the Extracellular side of the membrane; the sequence is REYEDDTQDLTMSLNSLPGNRFTLEGYTPQDHLN. A beta stranded transmembrane segment spans residues 606 to 615; it reads RVSLGFSQKL. Over 616-618 the chain is Periplasmic; it reads APE. Residues 619–628 traverse the membrane as a beta stranded segment; the sequence is LSLRGGYNWR. The Extracellular portion of the chain corresponds to 629–636; that stretch reads KGEDDTQQ. Residues 637–646 form a beta stranded membrane-spanning segment; it reads SVSLALSLDF.

This sequence belongs to the 'GDSL' lipolytic enzyme family.

The protein localises to the cell outer membrane. The catalysed reaction is a carboxylic ester + H2O = an alcohol + a carboxylate + H(+). Esterase whose enzymatic activity is required for rhamnolipid production, all kinds of cell motility (swimming, swarming, and twitching), and biofilm formation; the exact role of EstA in these processes is unclear. In vitro, has pronounced esterase activities towards p-nitrophenyl esters of short acyl chain length (C4-C6) and Tween detergents. Also shows relatively high activity towards beta-naphthyl butyrate, whereas its activities towards triacylglycerols and acyls-CoA are negligible. The sequence is that of Esterase EstA (estA) from Pseudomonas aeruginosa (strain ATCC 15692 / DSM 22644 / CIP 104116 / JCM 14847 / LMG 12228 / 1C / PRS 101 / PAO1).